A 348-amino-acid chain; its full sequence is Nitrogenase vanadium-iron protein beta chain (348 aa).

C31, C56, C115, and S153 together coordinate [8Fe-7S] cluster.

This sequence belongs to the NifD/NifK/NifE/NifN family. In terms of assembly, hexamer of two alpha, two beta, and two delta chains. The cofactor is [8Fe-7S] cluster.

It carries out the reaction N2 + 8 reduced [2Fe-2S]-[ferredoxin] + 16 ATP + 16 H2O = H2 + 8 oxidized [2Fe-2S]-[ferredoxin] + 2 NH4(+) + 16 ADP + 16 phosphate + 6 H(+). This vanadium-iron protein is part of the nitrogenase complex that catalyzes the key enzymatic reactions in nitrogen fixation. The chain is Nitrogenase vanadium-iron protein beta chain (vnfK) from Azorhizophilus paspali (Azotobacter paspali).